The following is a 335-amino-acid chain: MSLDINQIALHQLIKRDEQNLELVLRDSLLEPTTTVVEMVAELHRVYSAKNKAYGLFNEESELAQALRLQRQGEEDFLAFSRAATGRLRDELAKYPFADGGIVLFCHYRYLAVEYLLVTVLNNLSSMRVNENLDINPTHYLDINHADIVARIDLTEWETNPQSTRYLTFLKGRVGRKVADFFMDFLGASEGLNAKAQNRGLLQAVDDFTAEAQLDKAERQNVRQQVYSYCNEQLQAGEEIELESLSKELSGVSEVSFSEFTAEKGYELEESFPADRSTLRQLTKYAGSGGGLTINFDAMLLGERIFWDPATDTLTIKGTPPNLREQLQRRTSGEK.

This sequence belongs to the YejK family.

Its subcellular location is the cytoplasm. It localises to the nucleoid. The protein is Nucleoid-associated protein YejK of Salmonella enteritidis PT4 (strain P125109).